A 416-amino-acid chain; its full sequence is Serine hydroxymethyltransferase (416 aa).

(6S)-5,6,7,8-tetrahydrofolate is bound by residues Leu121 and 125–127 (GHL). Lys229 carries the N6-(pyridoxal phosphate)lysine modification.

This sequence belongs to the SHMT family. As to quaternary structure, homodimer. It depends on pyridoxal 5'-phosphate as a cofactor.

Its subcellular location is the cytoplasm. It carries out the reaction (6R)-5,10-methylene-5,6,7,8-tetrahydrofolate + glycine + H2O = (6S)-5,6,7,8-tetrahydrofolate + L-serine. The protein operates within one-carbon metabolism; tetrahydrofolate interconversion. It functions in the pathway amino-acid biosynthesis; glycine biosynthesis; glycine from L-serine: step 1/1. Catalyzes the reversible interconversion of serine and glycine with tetrahydrofolate (THF) serving as the one-carbon carrier. This reaction serves as the major source of one-carbon groups required for the biosynthesis of purines, thymidylate, methionine, and other important biomolecules. Also exhibits THF-independent aldolase activity toward beta-hydroxyamino acids, producing glycine and aldehydes, via a retro-aldol mechanism. This chain is Serine hydroxymethyltransferase, found in Neisseria meningitidis serogroup C / serotype 2a (strain ATCC 700532 / DSM 15464 / FAM18).